The chain runs to 470 residues: Chromosomal replication initiator protein DnaA (470 aa).

A domain I, interacts with DnaA modulators region spans residues 1-68 (MENFWSLCLG…SALAEEVLST (68 aa)). Positions 68-133 (TPVQIELALY…KKPKTLTETS (66 aa)) are domain II. A domain III, AAA+ region region spans residues 134-350 (GLNPAFRFDN…GALNRIIAMA (217 aa)). The ATP site is built by Gly178, Gly180, Lys181, and Thr182. The interval 351 to 470 (NFTGHAIDVS…IAVLIQVIRD (120 aa)) is domain IV, binds dsDNA.

The protein belongs to the DnaA family. In terms of assembly, oligomerizes as a right-handed, spiral filament on DNA at oriC.

It localises to the cytoplasm. Plays an essential role in the initiation and regulation of chromosomal replication. ATP-DnaA binds to the origin of replication (oriC) to initiate formation of the DNA replication initiation complex once per cell cycle. Binds the DnaA box (a 9 base pair repeat at the origin) and separates the double-stranded (ds)DNA. Forms a right-handed helical filament on oriC DNA; dsDNA binds to the exterior of the filament while single-stranded (ss)DNA is stabiized in the filament's interior. The ATP-DnaA-oriC complex binds and stabilizes one strand of the AT-rich DNA unwinding element (DUE), permitting loading of DNA polymerase. After initiation quickly degrades to an ADP-DnaA complex that is not apt for DNA replication. Binds acidic phospholipids. This is Chromosomal replication initiator protein DnaA from Methylobacillus flagellatus (strain ATCC 51484 / DSM 6875 / VKM B-1610 / KT).